A 68-amino-acid polypeptide reads, in one-letter code: Large ribosomal subunit protein bL32 (68 aa).

Belongs to the bacterial ribosomal protein bL32 family.

In Ruegeria pomeroyi (strain ATCC 700808 / DSM 15171 / DSS-3) (Silicibacter pomeroyi), this protein is Large ribosomal subunit protein bL32.